A 387-amino-acid chain; its full sequence is Anhydro-N-acetylmuramic acid kinase (387 aa).

9–16 (GTSADGVD) lines the ATP pocket.

It belongs to the anhydro-N-acetylmuramic acid kinase family.

It carries out the reaction 1,6-anhydro-N-acetyl-beta-muramate + ATP + H2O = N-acetyl-D-muramate 6-phosphate + ADP + H(+). It participates in amino-sugar metabolism; 1,6-anhydro-N-acetylmuramate degradation. It functions in the pathway cell wall biogenesis; peptidoglycan recycling. Catalyzes the specific phosphorylation of 1,6-anhydro-N-acetylmuramic acid (anhMurNAc) with the simultaneous cleavage of the 1,6-anhydro ring, generating MurNAc-6-P. Is required for the utilization of anhMurNAc either imported from the medium or derived from its own cell wall murein, and thus plays a role in cell wall recycling. This chain is Anhydro-N-acetylmuramic acid kinase, found in Synechococcus sp. (strain WH7803).